Reading from the N-terminus, the 108-residue chain is Phosphoribosyl-ATP pyrophosphatase (108 aa).

This sequence belongs to the PRA-PH family.

The protein localises to the cytoplasm. The catalysed reaction is 1-(5-phospho-beta-D-ribosyl)-ATP + H2O = 1-(5-phospho-beta-D-ribosyl)-5'-AMP + diphosphate + H(+). It functions in the pathway amino-acid biosynthesis; L-histidine biosynthesis; L-histidine from 5-phospho-alpha-D-ribose 1-diphosphate: step 2/9. The sequence is that of Phosphoribosyl-ATP pyrophosphatase from Geobacter sulfurreducens (strain ATCC 51573 / DSM 12127 / PCA).